Reading from the N-terminus, the 473-residue chain is 3-isopropylmalate dehydratase large subunit (473 aa).

Residues Cys-348, Cys-408, and Cys-411 each contribute to the [4Fe-4S] cluster site. Residues 421–440 are disordered; that stretch reads GDEASASSSNRNFIGRQGSK.

It belongs to the aconitase/IPM isomerase family. LeuC type 1 subfamily. Heterodimer of LeuC and LeuD. [4Fe-4S] cluster serves as cofactor.

It catalyses the reaction (2R,3S)-3-isopropylmalate = (2S)-2-isopropylmalate. It participates in amino-acid biosynthesis; L-leucine biosynthesis; L-leucine from 3-methyl-2-oxobutanoate: step 2/4. Its function is as follows. Catalyzes the isomerization between 2-isopropylmalate and 3-isopropylmalate, via the formation of 2-isopropylmaleate. In Haloferax volcanii (strain ATCC 29605 / DSM 3757 / JCM 8879 / NBRC 14742 / NCIMB 2012 / VKM B-1768 / DS2) (Halobacterium volcanii), this protein is 3-isopropylmalate dehydratase large subunit.